The chain runs to 439 residues: GTPase Obg (439 aa).

The region spanning T5 to L164 is the Obg domain. Residues A165 to R335 form the OBG-type G domain. Residues G171–S178, F196–T200, D217–G220, N287–D290, and S316–A318 each bind GTP. S178 and T198 together coordinate Mg(2+). The region spanning L356 to D433 is the OCT domain.

Belongs to the TRAFAC class OBG-HflX-like GTPase superfamily. OBG GTPase family. Monomer. Mg(2+) is required as a cofactor.

The protein localises to the cytoplasm. Its function is as follows. An essential GTPase which binds GTP, GDP and possibly (p)ppGpp with moderate affinity, with high nucleotide exchange rates and a fairly low GTP hydrolysis rate. Plays a role in control of the cell cycle, stress response, ribosome biogenesis and in those bacteria that undergo differentiation, in morphogenesis control. The polypeptide is GTPase Obg (Chloroflexus aurantiacus (strain ATCC 29364 / DSM 637 / Y-400-fl)).